A 192-amino-acid polypeptide reads, in one-letter code: Leucine-rich repeat-containing protein 51 (192 aa).

3 LRR repeats span residues 49–71 (SLTQSLWLNNNVLNDLKDFNQVV), 80–101 (NLAWIDLSFNDLTTIDPVLTTF), and 103–124 (NLSVLYLHGNGIHRLGEVNKLA). Residues 137-175 (NPIEEEKGYRQYVLCNLPRITTFDFSGVTRADRSTAEVW) form the LRRCT domain.

Widely expressed in adult and embryonic tissues. Expressed in the developing choroid plexus from 12.5 dpc and in the epithelium of the developing airway tract from 14.5 dpc. Also expressed in the postnatal inner ear.

The protein resides in the cytoplasm. This Mus musculus (Mouse) protein is Leucine-rich repeat-containing protein 51.